Reading from the N-terminus, the 269-residue chain is 2-dehydro-3-deoxyphosphooctonate aldolase (269 aa).

The protein belongs to the KdsA family.

The protein localises to the cytoplasm. It carries out the reaction D-arabinose 5-phosphate + phosphoenolpyruvate + H2O = 3-deoxy-alpha-D-manno-2-octulosonate-8-phosphate + phosphate. It functions in the pathway carbohydrate biosynthesis; 3-deoxy-D-manno-octulosonate biosynthesis; 3-deoxy-D-manno-octulosonate from D-ribulose 5-phosphate: step 2/3. The protein operates within bacterial outer membrane biogenesis; lipopolysaccharide biosynthesis. This chain is 2-dehydro-3-deoxyphosphooctonate aldolase, found in Chlamydia trachomatis serovar L2 (strain ATCC VR-902B / DSM 19102 / 434/Bu).